Consider the following 580-residue polypeptide: Formate--tetrahydrofolate ligase (580 aa).

Position 65–72 (65–72 (TPHGEGKT)) interacts with ATP.

The protein belongs to the formate--tetrahydrofolate ligase family.

The catalysed reaction is (6S)-5,6,7,8-tetrahydrofolate + formate + ATP = (6R)-10-formyltetrahydrofolate + ADP + phosphate. Its pathway is one-carbon metabolism; tetrahydrofolate interconversion. The polypeptide is Formate--tetrahydrofolate ligase (Shewanella baltica (strain OS223)).